The chain runs to 373 residues: Probable jasmonic acid carboxyl methyltransferase 2 (373 aa).

Residue Tyr18 participates in S-adenosyl-L-homocysteine binding. Gln25 is a jasmonate binding site. S-adenosyl-L-homocysteine is bound by residues Cys59, Asn64, Asp96, Leu97, Ser135, and Phe136. Jasmonate is bound by residues His156 and Trp157. Positions 174, 260, 262, and 263 each coordinate Mg(2+).

The protein belongs to the methyltransferase superfamily. Type-7 methyltransferase family. Mg(2+) serves as cofactor.

It is found in the cytoplasm. The protein resides in the nucleus. The enzyme catalyses jasmonate + S-adenosyl-L-methionine = methyl (-)-jasmonate + S-adenosyl-L-homocysteine. The protein operates within lipid metabolism; oxylipin biosynthesis. In terms of biological role, catalyzes the methylation of jasmonate into methyljasmonate, a plant volatile that acts as an important cellular regulator mediating diverse developmental processes and defense responses. The polypeptide is Probable jasmonic acid carboxyl methyltransferase 2 (Theobroma cacao (Cacao)).